Consider the following 327-residue polypeptide: Ferrochelatase (327 aa).

The Fe cation site is built by His-196 and Glu-277.

This sequence belongs to the ferrochelatase family.

Its subcellular location is the cytoplasm. It catalyses the reaction heme b + 2 H(+) = protoporphyrin IX + Fe(2+). It functions in the pathway porphyrin-containing compound metabolism; protoheme biosynthesis; protoheme from protoporphyrin-IX: step 1/1. Its function is as follows. Catalyzes the ferrous insertion into protoporphyrin IX. The polypeptide is Ferrochelatase (Gloeobacter violaceus (strain ATCC 29082 / PCC 7421)).